A 288-amino-acid chain; its full sequence is Protoheme IX farnesyltransferase (288 aa).

9 consecutive transmembrane segments (helical) span residues 16-36 (VWSL…NRFT), 37-57 (LTNI…SMGA), 88-108 (VKGL…LLFF), 111-131 (YLAA…YSYL), 138-158 (WNII…WYTV), 162-182 (FSVL…IHVW), 210-230 (AICI…PVFF), 236-256 (TYMI…VLFV), and 265-285 (LKLF…VLIF).

It belongs to the UbiA prenyltransferase family. Protoheme IX farnesyltransferase subfamily.

Its subcellular location is the cell membrane. The enzyme catalyses heme b + (2E,6E)-farnesyl diphosphate + H2O = Fe(II)-heme o + diphosphate. It functions in the pathway porphyrin-containing compound metabolism; heme O biosynthesis; heme O from protoheme: step 1/1. Converts heme B (protoheme IX) to heme O by substitution of the vinyl group on carbon 2 of heme B porphyrin ring with a hydroxyethyl farnesyl side group. The chain is Protoheme IX farnesyltransferase from Thermoplasma volcanium (strain ATCC 51530 / DSM 4299 / JCM 9571 / NBRC 15438 / GSS1).